The sequence spans 409 residues: Iron(III) salmochelin esterase (409 aa).

It belongs to the Fes family.

The protein localises to the cytoplasm. The catalysed reaction is Fe(III)-C-5-deoxy-beta-D-glucosyl-enterobactin + H2O = Fe(III)-{di[N-(2,3-dihydroxybenzoyl)-L-seryl]-N-(C-5-[deoxy-beta-D-glucosyl]-2,3-dihydroxybenzoyl)-L-serine} + H(+). The enzyme catalyses Fe(III)-{di[N-(2,3-dihydroxybenzoyl)-L-seryl]-N-(C-5-[deoxy-beta-D-glucosyl]-2,3-dihydroxybenzoyl)-L-serine} + H2O + H(+) = Fe(III)-{N-(2,3-dihydroxybenzoyl)-L-seryl-N-(C-5-[deoxy-beta-D-glucosyl]-2,3-dihydroxybenzoyl)-L-serine} + N-(2,3-dihydroxybenzoyl)-L-serine. It catalyses the reaction Fe(III)-{N-(2,3-dihydroxybenzoyl)-L-seryl-[N-(C-5-[deoxy-beta-D-glucosyl]-2,3-dihydroxybenzoyl)-L-serine]2} + H2O + H(+) = Fe(III)-{N-(2,3-dihydroxybenzoyl)-L-seryl-N-(C-5-[deoxy-beta-D-glucosyl]-2,3-dihydroxybenzoyl)-L-serine} + N-(C-5-[deoxy-beta-D-glucosyl]-2,3-dihydroxybenzoyl)-L-serine. It carries out the reaction Fe(III)-di(C-5-deoxy-beta-D-glucosyl)-enterobactin + H2O = Fe(III)-{N-(2,3-dihydroxybenzoyl)-L-seryl-[N-(C-5-[deoxy-beta-D-glucosyl]-2,3-dihydroxybenzoyl)-L-serine]2} + H(+). The catalysed reaction is Fe(III)-{N-(2,3-dihydroxybenzoyl)-L-seryl-[N-(C-5-[deoxy-beta-D-glucosyl]-2,3-dihydroxybenzoyl)-L-serine]2} + H2O + H(+) = Fe(III)-[N-(C-5-[deoxy-beta-D-glucosyl]-2,3-dihydroxybenzoyl)-L-serine]2 + N-(2,3-dihydroxybenzoyl)-L-serine. The enzyme catalyses Fe(III)-[N-(C-5-[deoxy-beta-D-glucosyl]-2,3-dihydroxybenzoyl)-L-serine]2 + H2O + H(+) = Fe(III)-[N-(C-5-[deoxy-beta-D-glucosyl]-2,3-dihydroxybenzoyl)-L-serine] + N-(C-5-[deoxy-beta-D-glucosyl]-2,3-dihydroxybenzoyl)-L-serine. Its function is as follows. Catalyzes the hydrolysis of both the apo and Fe3(+)-bound forms of enterobactin (Ent), monoglucosyl-C-Ent (MGE), diglucosyl-C-Ent (DGE) and triglucosyl-C-Ent (TGE). Shows higher catalytic efficiencies on Fe3(+)-bound forms. The initial linear trimer products are, in turn, very good substrates for further hydrolytic cleavage by IroD, leading to complete degradation of the trilactone to DHB-Ser and/or Glc-DHB-Ser monomers. Hydrolyzes MGE and DGE regioselectively. May be the ferric MGE/DGE esterase responsible for cytoplasmic iron release. This is Iron(III) salmochelin esterase from Escherichia coli O6:H1 (strain CFT073 / ATCC 700928 / UPEC).